A 453-amino-acid chain; its full sequence is MKDTETRPGRHRAPEPAHPEQPDTTGDTVVTVSGQDWDTVTETLGGAREERIVVNMGPQHPSTHGVLRLILEIEGETVVEARCGIGYLHTGIEKNLEYRTWMQGVTFVTRMDYLSPFYNETAYCLGVERLLGITEQIPERASIVRVLLMELNRISSHLVCLATGGMELGALTPMLFGFRERELILDVFETITGLRMNHAYIRPGGLAQDLPDDGVAKVRELLDLMPKRLRDMEHLLTQNPIFKARTQDIGYLDLTGCMALGITGPVLRSAGLPHDLRKSQPYCGYETYEFDVPTTTGCDCYGRYLIRVEEMKESLKIVEQCLDRLRPGPVMIEDKKLAWPADLKLGADGLGNSPAHIGRIMGSSMEGLIHHFKLVTEGIRVPAGQVYVAVESPRGELGVHMVSDGGTRPYRVHYRDPSFTNLQAVAAMCEGGMVADVIAAVASIDPVMGGVDR.

The span at 1–21 shows a compositional bias: basic and acidic residues; that stretch reads MKDTETRPGRHRAPEPAHPEQ. The disordered stretch occupies residues 1-30; sequence MKDTETRPGRHRAPEPAHPEQPDTTGDTVV.

The protein belongs to the complex I 49 kDa subunit family. NDH-1 is composed of 14 different subunits. Subunits NuoB, C, D, E, F, and G constitute the peripheral sector of the complex.

It localises to the cell membrane. It catalyses the reaction a quinone + NADH + 5 H(+)(in) = a quinol + NAD(+) + 4 H(+)(out). Functionally, NDH-1 shuttles electrons from NADH, via FMN and iron-sulfur (Fe-S) centers, to quinones in the respiratory chain. The immediate electron acceptor for the enzyme in this species is believed to be a menaquinone. Couples the redox reaction to proton translocation (for every two electrons transferred, four hydrogen ions are translocated across the cytoplasmic membrane), and thus conserves the redox energy in a proton gradient. This chain is NADH-quinone oxidoreductase subunit D, found in Nocardia farcinica (strain IFM 10152).